Here is a 1234-residue protein sequence, read N- to C-terminus: DNA-directed RNA polymerase subunit beta (1234 aa).

Residues 1189–1212 (VLSSQDNDYEEPEENDEEDELNLD) form a disordered region. Positions 1195-1212 (NDYEEPEENDEEDELNLD) are enriched in acidic residues.

The protein belongs to the RNA polymerase beta chain family. As to quaternary structure, the RNAP catalytic core consists of 2 alpha, 1 beta, 1 beta' and 1 omega subunit. When a sigma factor is associated with the core the holoenzyme is formed, which can initiate transcription.

The enzyme catalyses RNA(n) + a ribonucleoside 5'-triphosphate = RNA(n+1) + diphosphate. In terms of biological role, DNA-dependent RNA polymerase catalyzes the transcription of DNA into RNA using the four ribonucleoside triphosphates as substrates. The protein is DNA-directed RNA polymerase subunit beta of Clostridium kluyveri (strain NBRC 12016).